A 133-amino-acid chain; its full sequence is Crossover junction endodeoxyribonuclease Hjc (133 aa).

Glu12 serves as a coordination point for Mg(2+). Ser32 is a catalytic residue. Mg(2+) contacts are provided by Asp36 and Glu49.

It belongs to the Holliday junction resolvase Hjc family. Homodimer. The cofactor is Mg(2+).

It carries out the reaction Endonucleolytic cleavage at a junction such as a reciprocal single-stranded crossover between two homologous DNA duplexes (Holliday junction).. Functionally, a structure-specific endonuclease that resolves Holliday junction (HJ) intermediates during genetic recombination. Cleaves 4-way DNA junctions introducing paired nicks in opposing strands, leaving a 5'-terminal phosphate and a 3'-terminal hydroxyl group that are subsequently ligated to produce recombinant products. The protein is Crossover junction endodeoxyribonuclease Hjc of Methanocaldococcus jannaschii (strain ATCC 43067 / DSM 2661 / JAL-1 / JCM 10045 / NBRC 100440) (Methanococcus jannaschii).